We begin with the raw amino-acid sequence, 425 residues long: Histidine--tRNA ligase (425 aa).

This sequence belongs to the class-II aminoacyl-tRNA synthetase family. As to quaternary structure, homodimer.

Its subcellular location is the cytoplasm. It catalyses the reaction tRNA(His) + L-histidine + ATP = L-histidyl-tRNA(His) + AMP + diphosphate + H(+). This Shewanella sp. (strain MR-4) protein is Histidine--tRNA ligase.